A 256-amino-acid chain; its full sequence is Fructose-1,6-bisphosphatase/inositol-1-monophosphatase (256 aa).

Mg(2+) is bound by residues Glu67, Asp83, Leu85, and Asp86. Substrate contacts are provided by residues 86–88 (DGS), Arg170, Ile175, and Arg194. Asp201 contacts Mg(2+).

This sequence belongs to the inositol monophosphatase superfamily. FBPase class 4 family. In terms of assembly, homodimer. It depends on Mg(2+) as a cofactor.

The enzyme catalyses beta-D-fructose 1,6-bisphosphate + H2O = beta-D-fructose 6-phosphate + phosphate. It catalyses the reaction a myo-inositol phosphate + H2O = myo-inositol + phosphate. In terms of biological role, phosphatase with broad specificity; it can dephosphorylate fructose 1,6-bisphosphate (FBP) and inositol-1-phosphate (IMP). However, while possessing a high FBPase activity in vitro, does not participate in gluconeogenesis in vivo. The sequence is that of Fructose-1,6-bisphosphatase/inositol-1-monophosphatase (suhB) from Thermococcus kodakarensis (strain ATCC BAA-918 / JCM 12380 / KOD1) (Pyrococcus kodakaraensis (strain KOD1)).